A 1405-amino-acid polypeptide reads, in one-letter code: Sterol 3-beta-glucosyltransferase (1405 aa).

2 stretches are compositionally biased toward basic and acidic residues: residues 1–16 (MRPF…DRKL) and 95–105 (TGQRPRKESSV). Disordered regions lie at residues 1 to 27 (MRPF…SASR), 83 to 186 (ARFD…SATP), and 203 to 230 (DLKA…ASVS). A compositionally biased stretch (polar residues) spans 106 to 115 (RKGTSVSVNT). Positions 116-126 (SSLDPSQRSSS) are enriched in low complexity. The segment covering 206–218 (ASSTERSQSSLNE) has biased composition (polar residues). The GRAM 1 domain occupies 246–285 (EKVLVEYACSLLQSMLLQGYMYVTEGHICFYAYLPKKSTV). A PH domain is found at 285–384 (VAIKSGYLHK…WVKALQKVIF (100 aa)). Disordered stretches follow at residues 461–526 (SQHL…DSSD) and 566–642 (TIYG…SGAP). Positions 483 to 493 (RWSLTSGTSRA) are enriched in polar residues. Over residues 570-589 (LDRRPSGRERRGRRNSDETA) the composition is skewed to basic and acidic residues. A compositionally biased stretch (polar residues) spans 590–603 (RSPSTRVNVGTGQQ). Over residues 606 to 624 (ELDRRTDGNTSGREARDTT) the composition is skewed to basic and acidic residues. The segment covering 626–642 (ESDQYTQDPTKSFSGAP) has biased composition (polar residues). The GRAM 2 domain maps to 724–790 (DRFRAHFALP…RDIENVEKEK (67 aa)). UDP-alpha-D-glucose contacts are provided by serine 911, arginine 912, aspartate 914, alanine 1214, histidine 1216, histidine 1229, glycine 1233, threonine 1234, aspartate 1253, and glutamine 1254. A disordered region spans residues 1330–1367 (SIASSTPFSPTPSAKTAAEQDADDDVEDSEEWTFVGDD). Residues 1332–1348 (ASSTPFSPTPSAKTAAE) are compositionally biased toward low complexity. Residues 1349–1367 (QDADDDVEDSEEWTFVGDD) show a composition bias toward acidic residues.

This sequence belongs to the glycosyltransferase 28 family.

It localises to the cytoplasm. The protein resides in the preautophagosomal structure membrane. It catalyses the reaction a sterol + UDP-alpha-D-glucose = a sterol 3-beta-D-glucoside + UDP + H(+). The enzyme catalyses ergosterol + UDP-alpha-D-glucose = ergosteryl 3-beta-D-glucoside + UDP + H(+). Functionally, sterol glycosyltransferase responsible for the glycosylation of ergosterol to form ergosterol-glucoside. This chain is Sterol 3-beta-glucosyltransferase, found in Aspergillus fumigatus (strain ATCC MYA-4609 / CBS 101355 / FGSC A1100 / Af293) (Neosartorya fumigata).